Consider the following 183-residue polypeptide: Alkyl hydroperoxide reductase AhpD (183 aa).

The active-site Proton donor is the C132. Cysteines 132 and 135 form a disulfide. Catalysis depends on C135, which acts as the Cysteine sulfenic acid (-SOH) intermediate.

This sequence belongs to the AhpD family.

The enzyme catalyses N(6)-[(R)-dihydrolipoyl]-L-lysyl-[lipoyl-carrier protein] + a hydroperoxide = N(6)-[(R)-lipoyl]-L-lysyl-[lipoyl-carrier protein] + an alcohol + H2O. Its function is as follows. Antioxidant protein with alkyl hydroperoxidase activity. Required for the reduction of the AhpC active site cysteine residues and for the regeneration of the AhpC enzyme activity. The sequence is that of Alkyl hydroperoxide reductase AhpD from Caulobacter vibrioides (strain ATCC 19089 / CIP 103742 / CB 15) (Caulobacter crescentus).